The following is a 1078-amino-acid chain: DNA gyrase subunit B (1078 aa).

One can recognise a Toprim domain in the interval 889 to 974 (GKILNIEKTD…QGYIYIACPP (86 aa)). Mg(2+)-binding residues include E895, D939, and D941.

It belongs to the type II topoisomerase GyrB family. In terms of assembly, heterotetramer, composed of two GyrA and two GyrB chains. In the heterotetramer, GyrA contains the active site tyrosine that forms a transient covalent intermediate with DNA, while GyrB binds cofactors and catalyzes ATP hydrolysis. Mg(2+) is required as a cofactor. Post-translationally, this protein undergoes a protein self splicing that involves a post-translational excision of the intervening region (intein) followed by peptide ligation.

The protein localises to the cytoplasm. The catalysed reaction is ATP-dependent breakage, passage and rejoining of double-stranded DNA.. Its function is as follows. A type II topoisomerase that negatively supercoils closed circular double-stranded (ds) DNA in an ATP-dependent manner to modulate DNA topology and maintain chromosomes in an underwound state. Negative supercoiling favors strand separation, and DNA replication, transcription, recombination and repair, all of which involve strand separation. Also able to catalyze the interconversion of other topological isomers of dsDNA rings, including catenanes and knotted rings. Type II topoisomerases break and join 2 DNA strands simultaneously in an ATP-dependent manner. The polypeptide is DNA gyrase subunit B (gyrB) (Synechocystis sp. (strain ATCC 27184 / PCC 6803 / Kazusa)).